The following is a 720-amino-acid chain: DNA replication licensing factor mcm7-A (720 aa).

A C4-type zinc finger spans residues 183–210; the sequence is CDQCGAETYQPIQSPTFMPLIMCPSREC. One can recognise an MCM domain in the interval 331–537; sequence FYEKLAASIA…NDLRLAQHIT (207 aa). ATP-binding residues include Y344, G383, A385, K386, S387, N488, R513, and R603. Residues 512–515 carry the Arginine finger motif; the sequence is SRFD.

Belongs to the MCM family. Component of the mcm2-7 complex (RLF-M). The complex forms a toroidal hexameric ring with the proposed subunit order mcm2-mcm6-mcm4-mcm7-mcm3-mcm5. The heterodimer of mmcm3/mcm5 interacts with mcm4, mmcm6, mcm7 and weakly with mcm2. The N-terminus is required for interaction with mmcm3, though this interaction may not be direct, and remains in a complex with mmcm3 throughout the cell cycle. Begins to associate with zmcm6 at the neurula stage. Component of the replisome complex. Component of the CMG helicase complex, composed of the mcm2-7 complex, the GINS complex and cdc45. Ubiquitinated by traip when forks converge following formation of DNA interstrand cross-links. Ubiquitinated via 'Lys-6'- and 'Lys-63'-linked polyubiquitination by traip. Short ubiquitin chains on mcm7 promote recruitment of DNA glycosylase neil3. If the interstrand cross-link cannot be cleaved by neil3, the ubiquitin chains continue to grow on mcm7, promoting the unloading of the CMG helicase complex by the vcp/p97 ATPase.

Its subcellular location is the nucleus. The protein resides in the chromosome. It carries out the reaction ATP + H2O = ADP + phosphate + H(+). Its function is as follows. Acts as a component of the mcm2-7 complex (mcm complex) which is the putative replicative helicase essential for 'once per cell cycle' DNA replication initiation and elongation in eukaryotic cells. The active ATPase sites in the mcm2-7 ring are formed through the interaction surfaces of two neighboring subunits such that a critical structure of a conserved arginine finger motif is provided in trans relative to the ATP-binding site of the Walker A box of the adjacent subunit. The six ATPase active sites, however, are likely to contribute differentially to the complex helicase activity. The existence of maternal and zygotic forms of mcm3 and mcm6 suggests that specific forms of mcm2-7 complexes may be used during different stages of development. The protein is DNA replication licensing factor mcm7-A (mcm7-a) of Xenopus laevis (African clawed frog).